Reading from the N-terminus, the 61-residue chain is Statherin (61 aa).

The first 19 residues, methionine 1 to residue 19, serve as a signal peptide directing secretion. The tract at residues aspartate 20 to lysine 25 is hydroxyapatite-binding; inhibits crystal growth. Phosphoserine is present on residues serine 21 and serine 22. Residues arginine 37–tyrosine 61 form a disordered region. Residues arginine 37 to tyrosine 61 form a hydrophobic; inhibits precipitation of calcium phosphate salts region. Positions proline 43–tyrosine 61 are enriched in pro residues.

The protein belongs to the histatin/statherin family. As to expression, secreted by parotid and submandibular glands.

The protein resides in the secreted. In terms of biological role, salivary protein that stabilizes saliva supersaturated with calcium salts by inhibiting the precipitation of calcium phosphate salts. It also modulates hydroxyapatite crystal formation on the tooth surface. The polypeptide is Statherin (STATH) (Macaca fascicularis (Crab-eating macaque)).